The following is a 947-amino-acid chain: Serine/threonine-protein kinase PKH2 (947 aa).

Positions 1 to 14 (MHKFRYSLHQHYSK) are enriched in basic residues. Disordered stretches follow at residues 1 to 43 (MHKF…SSSS), 108 to 132 (SLGN…LSSH), and 162 to 212 (FNHL…NEEN). Residues 108 to 117 (SLGNTTNETG) are compositionally biased toward polar residues. Positions 187-198 (NTEEEENNDDTD) are enriched in acidic residues. Positions 199-212 (EIPKSETLKQNEEN) are enriched in basic and acidic residues. In terms of domain architecture, Protein kinase spans 240–502 (FKFGKELGEG…IPEIQKHYFF (263 aa)). ATP is bound by residues 250-252 (SYS) and lysine 269. The segment at 271–316 (LDKRHIIKEKKVKYVNIEKHALNRLSNRLGVISLYFTFQDKDSLYF) is PIF-pocket. ATP contacts are provided by residues 319–321 (DYA) and glutamate 325. Aspartate 364 acts as the Proton acceptor in catalysis. ATP-binding residues include glutamate 368 and aspartate 382. 2 stretches are compositionally biased toward low complexity: residues 550-579 (VKKS…KGSS) and 618-632 (SSTS…SNSN). 4 disordered regions span residues 550–598 (VKKS…STEK), 611–644 (KPAT…QQDY), 660–686 (SVGS…IHQQ), and 794–816 (NMKR…ASTS). Residues 802 to 811 (DSKKSMDIER) show a composition bias toward basic and acidic residues.

This sequence belongs to the protein kinase superfamily. AGC Ser/Thr protein kinase family. PDPK1 subfamily.

It localises to the nucleus. Its subcellular location is the cytoplasm. The protein resides in the cell cortex. It catalyses the reaction L-seryl-[protein] + ATP = O-phospho-L-seryl-[protein] + ADP + H(+). The enzyme catalyses L-threonyl-[protein] + ATP = O-phospho-L-threonyl-[protein] + ADP + H(+). Serine/threonine-protein kinase which is part sphingolipid-mediated signaling pathway that is required for the internalization step of endocytosis by regulating eisosome assembly and organization, and modulating the organization of the plasma membrane. Phosphorylates and activates PKC1. Activates YPK1 and YPK2, 2 components of signaling cascade required for maintenance of cell wall integrity. Required for stress-induced P-body assembly and regulates global mRNA decay at the deadenylation step. This chain is Serine/threonine-protein kinase PKH2, found in Candida albicans (strain SC5314 / ATCC MYA-2876) (Yeast).